A 929-amino-acid polypeptide reads, in one-letter code: MAYRGAGGPGGGRDYDGHNMQDLNPHSQYSNVQLPPGHEQEDEAHRSLLTQGTTLYDHDRLGAHTPPVRPVSAYSLTESYAPNAPTTVPGSAVGASPSPFQNDYGVSSGYQGAMGGHADDGFPIGGGDPQQGHPYDTEDSWVQRQNPNAAPQGGGLKRYATRKVKLVQGSVLSIDYNVPSAIRNAVQPKYREQEGTNEEFIKMRYTAATCDPNDFTLKNGYDLRPRMYNRHTELLIAITYYNEDKVLLSRTLHGVMQNIRDIVNLKKSTFWNKGGPAWQKIVVCLVFDGIEKTDKNVLDVLATIGIYQDGVVKKDVHGQETVAHIFEYTTQLSVTPSQQLIRPQDDGPNTLPPVQFIFCLKAKNSKKINSHRWLFNAFGRILNPEVCILLDAGTKPSSRSLLGLWEGFYNDKDLGGACGEIHAMLGKGGRKLLNPLVAVQNFEYKISNILDKPLESAFGYVSVLPGAFSAYRFRAIMGRPLEQYFHGDHTLSKILGKKGIEGMNIFKKNMFLAEDRILCFELVAKAGQKWHLSYIKAAKGETDVPEGAAEFISQRRRWLNGSFAATLYSLMHFGRMYKSGHNIIRMFFFHVQLIYNILNVIFTWFSLASYWLTTTVIMDLVGNPQVGQNAREGWPFGNTVTPLFNAVLKYIYLAFVILQFILALGNRPKGSKYTYVTSFFVFSVIQAYILVLSGYLVVQAFQTPIGEQIKTDTAKDFMDSIFGKSGAAGVILLALIAIYGIYFIASFMYLDPWHMFHSFPYYMLLMSTYINILMVYAFNNWHDVSWGTKGSDSNEALPSANITKGEKDEVVVEEIDKPQEDIDSQFEATVRRALAPFNDEEKPEPKDLEDSYKSFRTMLVVLWLFSNCLLAVAITSDNFDALTKNQNTARTASFFQFLLFSTAFLSLIRFIGFLWFLGKTGIMCCIARR.

The span at 1–12 shows a compositional bias: gly residues; the sequence is MAYRGAGGPGGG. Disordered regions lie at residues 1–43 and 114–156; these read MAYR…QEDE and MGGH…GGGL. 2 stretches are compositionally biased toward polar residues: residues 21–33 and 140–149; these read QDLN…SNVQ and SWVQRQNPNA. Asn-560 is a glycosylation site (N-linked (GlcNAc...) asparagine). 5 helical membrane-spanning segments follow: residues 587 to 607, 643 to 663, 678 to 698, 730 to 750, and 758 to 778; these read FFFH…WFSL, LFNA…FILA, SFFV…YLVV, VILL…FMYL, and SFPY…VYAF. Asn-801 carries N-linked (GlcNAc...) asparagine glycosylation. The next 2 membrane-spanning stretches (helical) occupy residues 857–877 and 897–917; these read TMLV…ITSD and FLLF…LWFL.

The protein belongs to the chitin synthase family. Class III subfamily.

It is found in the cell membrane. The enzyme catalyses [(1-&gt;4)-N-acetyl-beta-D-glucosaminyl](n) + UDP-N-acetyl-alpha-D-glucosamine = [(1-&gt;4)-N-acetyl-beta-D-glucosaminyl](n+1) + UDP + H(+). Its function is as follows. Polymerizes chitin, a structural polymer of the cell wall and septum, by transferring the sugar moiety of UDP-GlcNAc to the non-reducing end of the growing chitin polymer. CHS1 and CHS3 have compensatory functions in cell wall modifications in responses to stresses. Involved in appressoria formation and required for full virulence. In Pyricularia oryzae (strain 70-15 / ATCC MYA-4617 / FGSC 8958) (Rice blast fungus), this protein is Chitin synthase 1.